Reading from the N-terminus, the 284-residue chain is Lipoyl synthase (284 aa).

7 residues coordinate [4Fe-4S] cluster: Cys-38, Cys-43, Cys-49, Cys-64, Cys-68, Cys-71, and Ser-277. The 217-residue stretch at 50 to 266 (WSRGTATFLL…RDEALGMGFS (217 aa)) folds into the Radical SAM core domain.

This sequence belongs to the radical SAM superfamily. Lipoyl synthase family. It depends on [4Fe-4S] cluster as a cofactor.

The protein localises to the cytoplasm. The enzyme catalyses [[Fe-S] cluster scaffold protein carrying a second [4Fe-4S](2+) cluster] + N(6)-octanoyl-L-lysyl-[protein] + 2 oxidized [2Fe-2S]-[ferredoxin] + 2 S-adenosyl-L-methionine + 4 H(+) = [[Fe-S] cluster scaffold protein] + N(6)-[(R)-dihydrolipoyl]-L-lysyl-[protein] + 4 Fe(3+) + 2 hydrogen sulfide + 2 5'-deoxyadenosine + 2 L-methionine + 2 reduced [2Fe-2S]-[ferredoxin]. It participates in protein modification; protein lipoylation via endogenous pathway; protein N(6)-(lipoyl)lysine from octanoyl-[acyl-carrier-protein]: step 2/2. Its function is as follows. Catalyzes the radical-mediated insertion of two sulfur atoms into the C-6 and C-8 positions of the octanoyl moiety bound to the lipoyl domains of lipoate-dependent enzymes, thereby converting the octanoylated domains into lipoylated derivatives. The sequence is that of Lipoyl synthase from Chlorobium phaeovibrioides (strain DSM 265 / 1930) (Prosthecochloris vibrioformis (strain DSM 265)).